Consider the following 270-residue polypeptide: 4-hydroxy-tetrahydrodipicolinate reductase (270 aa).

NAD(+)-binding positions include 9–14 (GAGGRM) and Glu-35. Residue Arg-36 coordinates NADP(+). NAD(+) contacts are provided by residues 99 to 101 (GTT) and 123 to 126 (ASNF). His-156 functions as the Proton donor/acceptor in the catalytic mechanism. Residue His-157 participates in (S)-2,3,4,5-tetrahydrodipicolinate binding. Lys-160 functions as the Proton donor in the catalytic mechanism. A (S)-2,3,4,5-tetrahydrodipicolinate-binding site is contributed by 166–167 (GT).

Belongs to the DapB family.

Its subcellular location is the cytoplasm. The catalysed reaction is (S)-2,3,4,5-tetrahydrodipicolinate + NAD(+) + H2O = (2S,4S)-4-hydroxy-2,3,4,5-tetrahydrodipicolinate + NADH + H(+). The enzyme catalyses (S)-2,3,4,5-tetrahydrodipicolinate + NADP(+) + H2O = (2S,4S)-4-hydroxy-2,3,4,5-tetrahydrodipicolinate + NADPH + H(+). The protein operates within amino-acid biosynthesis; L-lysine biosynthesis via DAP pathway; (S)-tetrahydrodipicolinate from L-aspartate: step 4/4. In terms of biological role, catalyzes the conversion of 4-hydroxy-tetrahydrodipicolinate (HTPA) to tetrahydrodipicolinate. The chain is 4-hydroxy-tetrahydrodipicolinate reductase from Pasteurella multocida (strain Pm70).